Reading from the N-terminus, the 164-residue chain is Crossover junction endodeoxyribonuclease RuvC (164 aa).

Residues Asp-7, Glu-67, and Asp-140 contribute to the active site. Mg(2+) contacts are provided by Asp-7, Glu-67, and Asp-140.

The protein belongs to the RuvC family. In terms of assembly, homodimer which binds Holliday junction (HJ) DNA. The HJ becomes 2-fold symmetrical on binding to RuvC with unstacked arms; it has a different conformation from HJ DNA in complex with RuvA. In the full resolvosome a probable DNA-RuvA(4)-RuvB(12)-RuvC(2) complex forms which resolves the HJ. The cofactor is Mg(2+).

The protein localises to the cytoplasm. It catalyses the reaction Endonucleolytic cleavage at a junction such as a reciprocal single-stranded crossover between two homologous DNA duplexes (Holliday junction).. Its function is as follows. The RuvA-RuvB-RuvC complex processes Holliday junction (HJ) DNA during genetic recombination and DNA repair. Endonuclease that resolves HJ intermediates. Cleaves cruciform DNA by making single-stranded nicks across the HJ at symmetrical positions within the homologous arms, yielding a 5'-phosphate and a 3'-hydroxyl group; requires a central core of homology in the junction. The consensus cleavage sequence is 5'-(A/T)TT(C/G)-3'. Cleavage occurs on the 3'-side of the TT dinucleotide at the point of strand exchange. HJ branch migration catalyzed by RuvA-RuvB allows RuvC to scan DNA until it finds its consensus sequence, where it cleaves and resolves the cruciform DNA. In Alkaliphilus metalliredigens (strain QYMF), this protein is Crossover junction endodeoxyribonuclease RuvC.